Here is an 837-residue protein sequence, read N- to C-terminus: Protein ROD1 (837 aa).

Phosphoserine is present on residues Ser138 and Ser141. A Glycyl lysine isopeptide (Lys-Gly) (interchain with G-Cter in ubiquitin) cross-link involves residue Lys401. A Phosphoserine modification is found at Ser436. The PY-motif motif lies at 487–490 (PPNY). Ser536 carries the phosphoserine modification. The short motif at 656-659 (PPAY) is the PY-motif element. 2 disordered regions span residues 675–726 (ERPQ…SVSL) and 763–837 (SFTS…RDRS). A compositionally biased stretch (low complexity) spans 685 to 703 (TSSLLPLPGSSKSSNNLKR). Positions 716-726 (PRNNSGSSVSL) are enriched in polar residues. Phosphoserine is present on residues Ser720 and Ser725. Over residues 763–773 (SFTSNSSSKNN) the composition is skewed to low complexity. Positions 774–792 (SHFDKTDSTSDANKPREEE) are enriched in basic and acidic residues. Over residues 805-815 (SSSVRSNNSNS) the composition is skewed to low complexity.

This sequence belongs to the arrestin family. Interacts with RSP5 via its 2 PY-motifs.

It localises to the membrane. Functionally, mediates resistance to o-dinitrobenzene, calcium and zinc. This is Protein ROD1 (ROD1) from Saccharomyces cerevisiae (strain ATCC 204508 / S288c) (Baker's yeast).